The chain runs to 178 residues: N-alpha-acetyltransferase 20 (178 aa).

Positions 2–157 constitute an N-acetyltransferase domain; that stretch reads TTLRAFTCDD…DAYDMRKALS (156 aa).

The protein belongs to the acetyltransferase family. ARD1 subfamily. As to quaternary structure, component of the N-terminal acetyltransferase B (NatB) complex which is composed of NAA20 and NAA25.

Its subcellular location is the cytoplasm. The protein localises to the nucleus. The enzyme catalyses N-terminal L-methionyl-L-asparaginyl-[protein] + acetyl-CoA = N-terminal N(alpha)-acetyl-L-methionyl-L-asparaginyl-[protein] + CoA + H(+). The catalysed reaction is N-terminal L-methionyl-L-glutaminyl-[protein] + acetyl-CoA = N-terminal N(alpha)-acetyl-L-methionyl-L-glutaminyl-[protein] + CoA + H(+). It carries out the reaction N-terminal L-methionyl-L-aspartyl-[protein] + acetyl-CoA = N-terminal N(alpha)-acetyl-L-methionyl-L-aspartyl-[protein] + CoA + H(+). It catalyses the reaction N-terminal L-methionyl-L-glutamyl-[protein] + acetyl-CoA = N-terminal N(alpha)-acetyl-L-methionyl-L-glutamyl-[protein] + CoA + H(+). In terms of biological role, catalytic subunit of the NatB complex which catalyzes acetylation of the N-terminal methionine residues of peptides beginning with Met-Asp, Met-Glu, Met-Asn and Met-Gln. Proteins with cell cycle functions are overrepresented in the pool of NatB substrates. Required for maintaining the structure and function of actomyosin fibers and for proper cellular migration. The polypeptide is N-alpha-acetyltransferase 20 (NAA20) (Homo sapiens (Human)).